The primary structure comprises 352 residues: DNA polymerase IV (352 aa).

In terms of domain architecture, UmuC spans 7 to 187 (IIHIDMDCFY…LSLKKIPGIG (181 aa)). Mg(2+) is bound by residues aspartate 11 and aspartate 105. Glutamate 106 is an active-site residue.

Belongs to the DNA polymerase type-Y family. Monomer. Mg(2+) is required as a cofactor.

It localises to the cytoplasm. It catalyses the reaction DNA(n) + a 2'-deoxyribonucleoside 5'-triphosphate = DNA(n+1) + diphosphate. Functionally, poorly processive, error-prone DNA polymerase involved in untargeted mutagenesis. Copies undamaged DNA at stalled replication forks, which arise in vivo from mismatched or misaligned primer ends. These misaligned primers can be extended by PolIV. Exhibits no 3'-5' exonuclease (proofreading) activity. May be involved in translesional synthesis, in conjunction with the beta clamp from PolIII. This chain is DNA polymerase IV, found in Colwellia psychrerythraea (strain 34H / ATCC BAA-681) (Vibrio psychroerythus).